The chain runs to 419 residues: Vacuolar aspartic protease (419 aa).

Positions 1 to 22 (MQLSLSALTTVALALTSSLVDA) are cleaved as a signal peptide. The region spanning 104–415 (YFTEIQIGTP…DLDKNAVGLA (312 aa)) is the Peptidase A1 domain. D122 is a catalytic residue. A disulfide bond links C135 and C140. An N-linked (GlcNAc...) asparagine glycan is attached at N157. The active site involves D307. C341 and C374 are disulfide-bonded. N-linked (GlcNAc...) asparagine glycosylation is present at N358. The short motif at 417–419 (TKV) is the Microbody targeting signal element.

It belongs to the peptidase A1 family.

The protein localises to the vacuole. The chain is Vacuolar aspartic protease (APR1) from Candida albicans (Yeast).